We begin with the raw amino-acid sequence, 136 residues long: Large ribosomal subunit protein uL16 (136 aa).

It belongs to the universal ribosomal protein uL16 family. In terms of assembly, part of the 50S ribosomal subunit.

In terms of biological role, binds 23S rRNA and is also seen to make contacts with the A and possibly P site tRNAs. In Shewanella halifaxensis (strain HAW-EB4), this protein is Large ribosomal subunit protein uL16.